Consider the following 394-residue polypeptide: G2/mitotic-specific cyclin-B2 (394 aa).

Belongs to the cyclin family. Cyclin AB subfamily. Interacts with the CDK1 protein kinase to form a serine/threonine kinase holoenzyme complex also known as maturation promoting factor (MPF). The cyclin subunit imparts substrate specificity to the complex.

Functionally, essential for the control of the cell cycle at the G2/M (mitosis) transition. This Anguilla japonica (Japanese eel) protein is G2/mitotic-specific cyclin-B2 (ccnb2).